The sequence spans 792 residues: Cullin-4 (792 aa).

Positions 1-10 (MSLPTKRSTF) are enriched in polar residues. Residues 1–43 (MSLPTKRSTFSAASASDDSSYSSPPMKKAKNDLHHSPQHPNTA) form a disordered region. Over residues 11-23 (SAASASDDSSYSS) the composition is skewed to low complexity. Residues 724-784 (DRQYQIDAAI…REYLEREKSN (61 aa)) form the Cullin neddylation domain. A Glycyl lysine isopeptide (Lys-Gly) (interchain with G-Cter in NEDD8) cross-link involves residue K738.

Belongs to the cullin family. In terms of assembly, interacts with COP10, CSN3, CSN4, CSN5, CSN8, DDB1A, DDB1B, DDB2, DET1 and RBX1. In terms of processing, neddylated (rubylated). Deneddylated via its interaction with the COP9 signalosome (CSN) complex. In terms of tissue distribution, ubiquitous.

Its subcellular location is the nucleus. It participates in protein modification; protein ubiquitination. In terms of biological role, component of the CUL4-RBX1-CDD (COP10-DDB1a-DET1) E3 ubiquitin-protein ligase complex which mediates the ubiquitination and subsequent proteasomal degradation of target proteins. Participates in the CDD complex to light-mediated control of development. May repress photomorphogenesis through enhancing COP1 E3 ubiquitin-protein ligase activity. Acts together with the CUL4-DDB1-COP1-SPA E3 ubiquitin-protein ligase complexes in the repression of photomorphogenesis and flowering time. Component ot the CUL4-RBX1-DDB1-PRL1 E3 ubiquitin-protein ligase complex which mediates ubiquitination and subsequent degradation of AKIN10. Component of the CUL4-RBX1-DDB1-DWA1/DWA2 E3 ubiquitin-protein ligase complex that acts as a negative regulator in abscisic acid (ABA) signaling and may target ABI5 for degradation. This Arabidopsis thaliana (Mouse-ear cress) protein is Cullin-4 (CUL4).